A 316-amino-acid polypeptide reads, in one-letter code: 4-hydroxy-3-methylbut-2-enyl diphosphate reductase (316 aa).

Residue C12 coordinates [4Fe-4S] cluster. H41 and H74 together coordinate (2E)-4-hydroxy-3-methylbut-2-enyl diphosphate. H41 and H74 together coordinate dimethylallyl diphosphate. The isopentenyl diphosphate site is built by H41 and H74. [4Fe-4S] cluster is bound at residue C96. H124 provides a ligand contact to (2E)-4-hydroxy-3-methylbut-2-enyl diphosphate. Dimethylallyl diphosphate is bound at residue H124. An isopentenyl diphosphate-binding site is contributed by H124. The active-site Proton donor is the E126. Residue T167 coordinates (2E)-4-hydroxy-3-methylbut-2-enyl diphosphate. C197 contributes to the [4Fe-4S] cluster binding site. Residues S225, S226, N227, and S269 each coordinate (2E)-4-hydroxy-3-methylbut-2-enyl diphosphate. S225, S226, N227, and S269 together coordinate dimethylallyl diphosphate. Isopentenyl diphosphate contacts are provided by S225, S226, N227, and S269.

It belongs to the IspH family. As to quaternary structure, homodimer. It depends on [4Fe-4S] cluster as a cofactor.

The enzyme catalyses isopentenyl diphosphate + 2 oxidized [2Fe-2S]-[ferredoxin] + H2O = (2E)-4-hydroxy-3-methylbut-2-enyl diphosphate + 2 reduced [2Fe-2S]-[ferredoxin] + 2 H(+). It carries out the reaction dimethylallyl diphosphate + 2 oxidized [2Fe-2S]-[ferredoxin] + H2O = (2E)-4-hydroxy-3-methylbut-2-enyl diphosphate + 2 reduced [2Fe-2S]-[ferredoxin] + 2 H(+). The protein operates within isoprenoid biosynthesis; dimethylallyl diphosphate biosynthesis; dimethylallyl diphosphate from (2E)-4-hydroxy-3-methylbutenyl diphosphate: step 1/1. It functions in the pathway isoprenoid biosynthesis; isopentenyl diphosphate biosynthesis via DXP pathway; isopentenyl diphosphate from 1-deoxy-D-xylulose 5-phosphate: step 6/6. Catalyzes the conversion of 1-hydroxy-2-methyl-2-(E)-butenyl 4-diphosphate (HMBPP) into a mixture of isopentenyl diphosphate (IPP) and dimethylallyl diphosphate (DMAPP). Acts in the terminal step of the DOXP/MEP pathway for isoprenoid precursor biosynthesis. The polypeptide is 4-hydroxy-3-methylbut-2-enyl diphosphate reductase (Pectobacterium carotovorum subsp. carotovorum (strain PC1)).